Consider the following 838-residue polypeptide: Lymphoid-specific helicase (838 aa).

Positions 30–115 (MLEEEEQLEA…SLKVKKGKNS (86 aa)) form a coiled coil. The segment covering 94 to 108 (QKKKEKLERKKESLK) has biased composition (basic and acidic residues). Residues 94-135 (QKKKEKLERKKESLKVKKGKNSIDASEEKPVMRKKRGREDES) are disordered. A Phosphoserine modification is found at S115. Residues 119 to 134 (SEEKPVMRKKRGREDE) show a composition bias toward basic and acidic residues. Residues 235–403 (RMLWENGING…WSLLNFLLPD (169 aa)) form the Helicase ATP-binding domain. 248–255 (DEMGLGKT) is an ATP binding site. The short motif at 354–357 (DEGH) is the DEAH box element. Residues S503 and S515 each carry the phosphoserine modification. Residues 603–767 (ILDRMLPELK…GLNLSKNFLD (165 aa)) enclose the Helicase C-terminal domain.

Belongs to the SNF2/RAD54 helicase family. Highly expressed in proliferative tissues such as adult thymus and testis, and expressed at lower levels in uterus, small intestine, colon, and peripheral blood mononuclear cells. Also expressed in neoplastic cell lines including those derived from myeloid and lymphoid leukemias.

It is found in the nucleus. Functionally, plays an essential role in normal development and survival. Involved in regulation of the expansion or survival of lymphoid cells. Required for de novo or maintenance DNA methylation. May control silencing of the imprinted CDKN1C gene through DNA methylation. May play a role in formation and organization of heterochromatin, implying a functional role in the regulation of transcription and mitosis. This chain is Lymphoid-specific helicase, found in Homo sapiens (Human).